The chain runs to 289 residues: tRNA (adenine(58)-N(1))-methyltransferase catalytic subunit TRMT61A (289 aa).

An N-acetylserine modification is found at serine 2. Residues 20–22 (LGH), 35–42 (QTQTRHGV), 64–65 (GW), 85–89 (QILYS), and 110–117 (SGTGSGSV) contribute to the substrate site. S-adenosyl-L-methionine contacts are provided by residues leucine 87, 114–116 (SGS), glutamate 135, arginine 140, 163–164 (DV), and aspartate 181. Residues 180-183 (LDIP) and 205-212 (SFSPCIEQ) contribute to the substrate site. Residues 245-272 (LPPPDLGTGTDGPAGSDTSPFRSGTPMK) are disordered. A compositionally biased stretch (low complexity) spans 250-259 (LGTGTDGPAG). Serine 263 is modified (phosphoserine). Threonine 278 serves as a coordination point for substrate.

Belongs to the class I-like SAM-binding methyltransferase superfamily. TRM61 family. Heterotetramer; composed of two copies of TRMT6 and two copies of TRMT61A.

It localises to the nucleus. It catalyses the reaction adenosine(58) in tRNA + S-adenosyl-L-methionine = N(1)-methyladenosine(58) in tRNA + S-adenosyl-L-homocysteine + H(+). The enzyme catalyses an adenosine in mRNA + S-adenosyl-L-methionine = an N(1)-methyladenosine in mRNA + S-adenosyl-L-homocysteine + H(+). In terms of biological role, catalytic subunit of tRNA (adenine-N(1)-)-methyltransferase, which catalyzes the formation of N(1)-methyladenine at position 58 (m1A58) in initiator methionyl-tRNA. Catalytic subunit of mRNA N(1)-methyltransferase complex, which mediates methylation of adenosine residues at the N(1) position of a small subset of mRNAs: N(1) methylation takes place in tRNA T-loop-like structures of mRNAs and is only present at low stoichiometries. This is tRNA (adenine(58)-N(1))-methyltransferase catalytic subunit TRMT61A (TRMT61A) from Homo sapiens (Human).